The following is a 136-amino-acid chain: Peptide methionine sulfoxide reductase B5 (136 aa).

The region spanning 14-135 (DEEWRAVLSP…NSVSIKFTPA (122 aa)) is the MsrB domain. Residues Cys-53, Cys-56, Cys-99, and Cys-102 each coordinate Zn(2+). Cysteines 71 and 124 form a disulfide. The Nucleophile role is filled by Cys-124.

It belongs to the MsrB Met sulfoxide reductase family. Requires Zn(2+) as cofactor.

The protein resides in the cytoplasm. It is found in the cytosol. The enzyme catalyses L-methionyl-[protein] + [thioredoxin]-disulfide + H2O = L-methionyl-(R)-S-oxide-[protein] + [thioredoxin]-dithiol. Its function is as follows. Catalyzes the reduction of methionine sulfoxide (MetSO) to methionine in proteins. Plays a protective role against oxidative stress by restoring activity to proteins that have been inactivated by methionine oxidation. MSRB family specifically reduces the MetSO R-enantiomer. The sequence is that of Peptide methionine sulfoxide reductase B5 (MSRB5) from Oryza sativa subsp. japonica (Rice).